Here is a 359-residue protein sequence, read N- to C-terminus: Acyl-CoA desaturase 3 (359 aa).

Positions 1–34 are disordered; the sequence is MPGHLLQEEMTPSYTTTTTITAPPSGSLQNGREK. Residues 1-72 lie on the Cytoplasmic side of the membrane; it reads MPGHLLQEEM…EGPPPKLEYV (72 aa). Residues 11–27 are compositionally biased toward low complexity; it reads TPSYTTTTTITAPPSGS. A helical transmembrane segment spans residues 73–93; sequence WRNIILMALLHVGALYGITLV. A substrate-binding site is contributed by Asn75. Over 94–97 the chain is Lumenal; that stretch reads PSCK. A helical transmembrane segment spans residues 98–118; sequence LYTCLFAFVYYVISIEGIGAG. At 119–217 the chain is on the cytoplasmic side; that stretch reads VHRLWSHRTY…EKLVMFQRRY (99 aa). 2 residues coordinate Fe cation: His120 and His125. The Histidine box-1 signature appears at 120-125; the sequence is HRLWSH. Substrate is bound by residues Asn148, Arg155, and Asp156. Fe cation-binding residues include His157, His160, and His161. Positions 157–161 match the Histidine box-2 motif; it reads HRAHH. Residues Arg188 and Lys189 each contribute to the substrate site. Ser203 carries the phosphoserine modification. The helical transmembrane segment at 218–237 threads the bilayer; that stretch reads YKPGILLMCFILPTLVPWYC. Topologically, residues 238-241 are lumenal; the sequence is WGET. The chain crosses the membrane as a helical span at residues 242 to 263; that stretch reads FLNSFYVATLLRYAVVLNATWL. A substrate-binding site is contributed by Trp262. Residues 264–359 are Cytoplasmic-facing; the sequence is VNSAAHLYGY…RTGDGSHKSG (96 aa). Positions 269, 298, 301, and 302 each coordinate Fe cation. A Histidine box-3 motif is present at residues 298–302; that stretch reads HNYHH.

The protein belongs to the fatty acid desaturase type 1 family. Requires Fe(2+) as cofactor. Detected in skin, but at lower levels compared to Scd1. Detected in the middlle part of the sebaceous gland, but not in hair follicle. Not detected in liver and brain.

It is found in the endoplasmic reticulum membrane. Its subcellular location is the microsome membrane. It carries out the reaction hexadecanoyl-CoA + 2 Fe(II)-[cytochrome b5] + O2 + 2 H(+) = (9Z)-hexadecenoyl-CoA + 2 Fe(III)-[cytochrome b5] + 2 H2O. Stearoyl-CoA desaturase that utilizes O(2) and electrons from reduced cytochrome b5 to introduce the first double bond into saturated fatty acyl-CoA substrates. Catalyzes the insertion of a cis double bond at the delta-9 position into fatty acyl-CoA substrates including palmitoyl-CoA. Has a strong preference for saturated fatty acids with chain lengths of 14 or 16 carbon atoms (C14:0 and C16:0), and has only very low activity with stearatate (C18:0). Required for the biosynthesis of membrane phospholipids, cholesterol esters and triglycerides. This is Acyl-CoA desaturase 3 from Mus musculus (Mouse).